A 146-amino-acid chain; its full sequence is Large ribosomal subunit protein uL15 (146 aa).

The tract at residues 1–54 (MTLRLNELAPAEGAKREHRRLGRGIGSGVGKTGGRGIKGQKSRKSGGVRPGFEG) is disordered. A compositionally biased stretch (gly residues) spans 23–37 (RGIGSGVGKTGGRGI).

Belongs to the universal ribosomal protein uL15 family. In terms of assembly, part of the 50S ribosomal subunit.

Functionally, binds to the 23S rRNA. The sequence is that of Large ribosomal subunit protein uL15 from Acinetobacter baumannii (strain SDF).